Here is a 744-residue protein sequence, read N- to C-terminus: 5-methyltetrahydropteroyltriglutamate--homocysteine methyltransferase (744 aa).

5-methyltetrahydropteroyltri-L-glutamate contacts are provided by residues 17–20 (REVK) and lysine 110. Residues 422–424 (IGS) and glutamate 475 each bind L-homocysteine. Residues 422–424 (IGS) and glutamate 475 each bind L-methionine. Position 552 (tryptophan 552) interacts with 5-methyltetrahydropteroyltri-L-glutamate. Aspartate 590 is a binding site for L-homocysteine. Position 590 (aspartate 590) interacts with L-methionine. A 5-methyltetrahydropteroyltri-L-glutamate-binding site is contributed by glutamate 596. 3 residues coordinate Zn(2+): histidine 632, cysteine 634, and glutamate 656. Histidine 685 acts as the Proton donor in catalysis. Cysteine 717 contacts Zn(2+).

The protein belongs to the vitamin-B12 independent methionine synthase family. It depends on Zn(2+) as a cofactor.

The catalysed reaction is 5-methyltetrahydropteroyltri-L-glutamate + L-homocysteine = tetrahydropteroyltri-L-glutamate + L-methionine. It participates in amino-acid biosynthesis; L-methionine biosynthesis via de novo pathway; L-methionine from L-homocysteine (MetE route): step 1/1. In terms of biological role, catalyzes the transfer of a methyl group from 5-methyltetrahydrofolate to homocysteine resulting in methionine formation. This is 5-methyltetrahydropteroyltriglutamate--homocysteine methyltransferase from Trichodesmium erythraeum (strain IMS101).